The primary structure comprises 359 residues: Peptide chain release factor 1 (359 aa).

An N5-methylglutamine modification is found at Gln232.

Belongs to the prokaryotic/mitochondrial release factor family. Methylated by PrmC. Methylation increases the termination efficiency of RF1.

Its subcellular location is the cytoplasm. Functionally, peptide chain release factor 1 directs the termination of translation in response to the peptide chain termination codons UAG and UAA. The sequence is that of Peptide chain release factor 1 from Lawsonia intracellularis (strain PHE/MN1-00).